Reading from the N-terminus, the 177-residue chain is Transmembrane protein 275 (177 aa).

The tract at residues 1–20 (MPQAKKSTETLAPAPPGRSR) is disordered. Helical transmembrane passes span 36–56 (GLCVLLAGLNVTLVGAFAAFL) and 63–83 (LVVGPALLVLALGFFAACCVC). Residues 113-177 (ESSERTAQDT…LNFPRDPAAS (65 aa)) form a disordered region. Residues 128-161 (SPAASAASSGRSSPGPGLFALDPPAPATAAPYLP) are compositionally biased toward low complexity.

Its subcellular location is the membrane. In Mus musculus (Mouse), this protein is Transmembrane protein 275.